The chain runs to 259 residues: UPF0246 protein PSPPH_1119 (259 aa).

This sequence belongs to the UPF0246 family.

In Pseudomonas savastanoi pv. phaseolicola (strain 1448A / Race 6) (Pseudomonas syringae pv. phaseolicola (strain 1448A / Race 6)), this protein is UPF0246 protein PSPPH_1119.